The primary structure comprises 214 residues: Pyridoxine/pyridoxamine 5'-phosphate oxidase (214 aa).

Residues 8 to 11 and Lys66 contribute to the substrate site; that span reads RINY. FMN contacts are provided by residues 61–66, 76–77, Arg82, Lys83, and Gln105; these read RILLIK and FT. Residues Tyr123, Arg127, and Ser131 each contribute to the substrate site. FMN-binding positions include 140 to 141 and Trp184; that span reads QS. Position 190-192 (190-192) interacts with substrate; sequence RLH. FMN is bound at residue Arg194.

It belongs to the pyridoxamine 5'-phosphate oxidase family. In terms of assembly, homodimer. Requires FMN as cofactor.

It carries out the reaction pyridoxamine 5'-phosphate + O2 + H2O = pyridoxal 5'-phosphate + H2O2 + NH4(+). The enzyme catalyses pyridoxine 5'-phosphate + O2 = pyridoxal 5'-phosphate + H2O2. The protein operates within cofactor metabolism; pyridoxal 5'-phosphate salvage; pyridoxal 5'-phosphate from pyridoxamine 5'-phosphate: step 1/1. It functions in the pathway cofactor metabolism; pyridoxal 5'-phosphate salvage; pyridoxal 5'-phosphate from pyridoxine 5'-phosphate: step 1/1. Functionally, catalyzes the oxidation of either pyridoxine 5'-phosphate (PNP) or pyridoxamine 5'-phosphate (PMP) into pyridoxal 5'-phosphate (PLP). The protein is Pyridoxine/pyridoxamine 5'-phosphate oxidase of Burkholderia vietnamiensis (strain G4 / LMG 22486) (Burkholderia cepacia (strain R1808)).